The chain runs to 660 residues: Probable Xaa-Pro aminopeptidase PTRG_10574 (660 aa).

Mn(2+) contacts are provided by Asp274, Asp285, Glu435, and Glu476. The interval 641-660 (SAGSGSTPLWKPHNKQDKKN) is disordered.

Belongs to the peptidase M24B family. It depends on Mn(2+) as a cofactor.

The catalysed reaction is Release of any N-terminal amino acid, including proline, that is linked to proline, even from a dipeptide or tripeptide.. Catalyzes the removal of a penultimate prolyl residue from the N-termini of peptides. The chain is Probable Xaa-Pro aminopeptidase PTRG_10574 from Pyrenophora tritici-repentis (strain Pt-1C-BFP) (Wheat tan spot fungus).